A 161-amino-acid chain; its full sequence is Cyclic pyranopterin monophosphate synthase (161 aa).

Residues 73–75 (LCH) and 110–111 (ME) each bind substrate. The active site involves D125.

Belongs to the MoaC family. As to quaternary structure, homohexamer; trimer of dimers.

The catalysed reaction is (8S)-3',8-cyclo-7,8-dihydroguanosine 5'-triphosphate = cyclic pyranopterin phosphate + diphosphate. Its pathway is cofactor biosynthesis; molybdopterin biosynthesis. Its function is as follows. Catalyzes the conversion of (8S)-3',8-cyclo-7,8-dihydroguanosine 5'-triphosphate to cyclic pyranopterin monophosphate (cPMP). This chain is Cyclic pyranopterin monophosphate synthase, found in Pseudomonas savastanoi pv. phaseolicola (strain 1448A / Race 6) (Pseudomonas syringae pv. phaseolicola (strain 1448A / Race 6)).